Reading from the N-terminus, the 175-residue chain is ATP synthase subunit d, mitochondrial (175 aa).

At serine 2 the chain carries N-acetylserine.

It belongs to the ATPase d subunit family.

Its subcellular location is the mitochondrion inner membrane. Mitochondrial membrane ATP synthase (F(1)F(0) ATP synthase or Complex V) produces ATP from ADP in the presence of a proton gradient across the membrane which is generated by electron transport complexes of the respiratory chain. F-type ATPases consist of two structural domains, F(1) - containing the extramembraneous catalytic core, and F(0) - containing the membrane proton channel, linked together by a central stalk and a peripheral stalk. During catalysis, ATP synthesis in the catalytic domain of F(1) is coupled via a rotary mechanism of the central stalk subunits to proton translocation. Part of the complex F(0) domain and the peripheric stalk, which acts as a stator to hold the catalytic alpha(3)beta(3) subcomplex and subunit a/ATP6 static relative to the rotary elements. This is ATP synthase subunit d, mitochondrial (atp7) from Schizosaccharomyces pombe (strain 972 / ATCC 24843) (Fission yeast).